The chain runs to 865 residues: Armadillo repeat-containing protein 2 (865 aa).

2 disordered regions span residues 39 to 75 and 214 to 243; these read TVRT…FSVH and SVPF…DQSR. Over residues 60 to 75 the composition is skewed to polar residues; that stretch reads SSRTPENRPPSSFSVH. ARM repeat units lie at residues 261 to 300, 303 to 343, 362 to 402, 407 to 448, 461 to 502, 505 to 546, 550 to 587, 589 to 614, 617 to 660, 662 to 703, 705 to 744, and 746 to 788; these read IEVD…HALE, NMLG…ALKV, EKND…TIKF, PEFL…HLLV, PLAR…KLTS, DCCV…NLTA, QARE…GEGD, RPEA…NLAI, GVGP…NLSY, KVKN…NLSQ, HDIC…NLTV, and RDKR…NFSE.

Required for sperm flagellum axoneme organization and function. Involved in axonemal central pair complex assembly and/or stability. This chain is Armadillo repeat-containing protein 2, found in Bos taurus (Bovine).